Here is a 79-residue protein sequence, read N- to C-terminus: Small ribosomal subunit protein bS18 (79 aa).

It belongs to the bacterial ribosomal protein bS18 family. As to quaternary structure, part of the 30S ribosomal subunit. Forms a tight heterodimer with protein bS6.

In terms of biological role, binds as a heterodimer with protein bS6 to the central domain of the 16S rRNA, where it helps stabilize the platform of the 30S subunit. In Pseudarthrobacter chlorophenolicus (strain ATCC 700700 / DSM 12829 / CIP 107037 / JCM 12360 / KCTC 9906 / NCIMB 13794 / A6) (Arthrobacter chlorophenolicus), this protein is Small ribosomal subunit protein bS18.